The primary structure comprises 256 residues: Floral homeotic protein APETALA 1-2 (256 aa).

The MADS-box domain maps to 1–61 (MGRGRVQLKR…GKLFEYSTDS (61 aa)). Residues 88 to 178 (NTNWSMEYNR…SKQIKERENV (91 aa)) form the K-box domain. The tract at residues 187 to 206 (DEQNHGHNMPPPPPPQQHQI) is disordered.

Homodimer capable of binding to CArG-box sequences.

The protein localises to the nucleus. Transcription factor that promotes early floral meristem identity in synergy with LEAFY. Displays a redundant function with CAULIFLOWER in the up-regulation of LEAFY. Required subsequently for the transition of an inflorescence meristem into a floral meristem, and for the normal development of sepals and petals in flowers. Regulates positively B class homeotic proteins. This is Floral homeotic protein APETALA 1-2 (2AP1) from Brassica oleracea var. italica (Broccoli).